The sequence spans 309 residues: D-alanine--D-alanine ligase (309 aa).

Residues 99–304 (KRVLLQAGIP…FPDLVQKIVD (206 aa)) enclose the ATP-grasp domain. An ATP-binding site is contributed by 132–187 (LKELGLPVVIKAPTQGSTIGTFIVREEGELEPAIAGALKYDLSFMAEAYLAGPEIT). The Mg(2+) site is built by aspartate 258, glutamate 271, and asparagine 273.

The protein belongs to the D-alanine--D-alanine ligase family. Mg(2+) serves as cofactor. Mn(2+) is required as a cofactor.

The protein resides in the cytoplasm. It catalyses the reaction 2 D-alanine + ATP = D-alanyl-D-alanine + ADP + phosphate + H(+). Its pathway is cell wall biogenesis; peptidoglycan biosynthesis. Its function is as follows. Cell wall formation. This Moorella thermoacetica (strain ATCC 39073 / JCM 9320) protein is D-alanine--D-alanine ligase.